The sequence spans 274 residues: Large ribosomal subunit protein uL2 (274 aa).

The segment at 223-265 is disordered; sequence VVMNPVDHPHGGGEGRTSGGRHPVSPWGMPTKGFKTRKNKRTD. Residues 256–265 are compositionally biased toward basic residues; the sequence is FKTRKNKRTD.

Belongs to the universal ribosomal protein uL2 family. In terms of assembly, part of the 50S ribosomal subunit. Forms a bridge to the 30S subunit in the 70S ribosome.

Functionally, one of the primary rRNA binding proteins. Required for association of the 30S and 50S subunits to form the 70S ribosome, for tRNA binding and peptide bond formation. It has been suggested to have peptidyltransferase activity; this is somewhat controversial. Makes several contacts with the 16S rRNA in the 70S ribosome. This is Large ribosomal subunit protein uL2 from Vibrio parahaemolyticus serotype O3:K6 (strain RIMD 2210633).